The following is a 297-amino-acid chain: Bifunctional protein FolD (297 aa).

Residues 167 to 169 (GRS) and isoleucine 233 contribute to the NADP(+) site.

The protein belongs to the tetrahydrofolate dehydrogenase/cyclohydrolase family. As to quaternary structure, homodimer.

The catalysed reaction is (6R)-5,10-methylene-5,6,7,8-tetrahydrofolate + NADP(+) = (6R)-5,10-methenyltetrahydrofolate + NADPH. It catalyses the reaction (6R)-5,10-methenyltetrahydrofolate + H2O = (6R)-10-formyltetrahydrofolate + H(+). Its pathway is one-carbon metabolism; tetrahydrofolate interconversion. Catalyzes the oxidation of 5,10-methylenetetrahydrofolate to 5,10-methenyltetrahydrofolate and then the hydrolysis of 5,10-methenyltetrahydrofolate to 10-formyltetrahydrofolate. The chain is Bifunctional protein FolD from Zymomonas mobilis subsp. mobilis (strain ATCC 31821 / ZM4 / CP4).